The primary structure comprises 571 residues: Potassium-transporting ATPase potassium-binding subunit (571 aa).

Helical transmembrane passes span 3 to 23 (LIGW…VKPL), 64 to 84 (LGYG…LYAI), 135 to 155 (LGLT…AVAL), 179 to 199 (LYVL…QGMP), 254 to 274 (LANL…TNVF), 284 to 304 (GWAI…VTYA), 330 to 350 (FGIV…CGAV), 357 to 376 (FTAL…EIIV), 421 to 441 (MLAI…ATVL), 488 to 508 (LALG…AIAG), and 527 to 547 (GGLF…LTFF).

It belongs to the KdpA family. The system is composed of three essential subunits: KdpA, KdpB and KdpC.

It localises to the cell inner membrane. Its function is as follows. Part of the high-affinity ATP-driven potassium transport (or Kdp) system, which catalyzes the hydrolysis of ATP coupled with the electrogenic transport of potassium into the cytoplasm. This subunit binds the periplasmic potassium ions and delivers the ions to the membrane domain of KdpB through an intramembrane tunnel. This is Potassium-transporting ATPase potassium-binding subunit from Methylorubrum populi (strain ATCC BAA-705 / NCIMB 13946 / BJ001) (Methylobacterium populi).